A 346-amino-acid chain; its full sequence is Methylthioribose-1-phosphate isomerase (346 aa).

Substrate contacts are provided by residues 46-48, arginine 89, and glutamine 196; that span reads RGA. Aspartate 237 serves as the catalytic Proton donor. Position 247-248 (247-248) interacts with substrate; sequence NK.

It belongs to the eIF-2B alpha/beta/delta subunits family. MtnA subfamily.

It catalyses the reaction 5-(methylsulfanyl)-alpha-D-ribose 1-phosphate = 5-(methylsulfanyl)-D-ribulose 1-phosphate. The protein operates within amino-acid biosynthesis; L-methionine biosynthesis via salvage pathway; L-methionine from S-methyl-5-thio-alpha-D-ribose 1-phosphate: step 1/6. Functionally, catalyzes the interconversion of methylthioribose-1-phosphate (MTR-1-P) into methylthioribulose-1-phosphate (MTRu-1-P). The protein is Methylthioribose-1-phosphate isomerase of Geobacter sulfurreducens (strain ATCC 51573 / DSM 12127 / PCA).